The sequence spans 269 residues: Energy-coupling factor transporter ATP-binding protein EcfA1 (269 aa).

Residues 8-242 enclose the ABC transporter domain; that stretch reads IVFKNVSFQY…AEELTTIGLD (235 aa). Residue 42-49 coordinates ATP; it reads GHNGSGKS.

It belongs to the ABC transporter superfamily. Energy-coupling factor EcfA family. Forms a stable energy-coupling factor (ECF) transporter complex composed of 2 membrane-embedded substrate-binding proteins (S component), 2 ATP-binding proteins (A component) and 2 transmembrane proteins (T component).

The protein resides in the cell membrane. In terms of biological role, ATP-binding (A) component of a common energy-coupling factor (ECF) ABC-transporter complex. Unlike classic ABC transporters this ECF transporter provides the energy necessary to transport a number of different substrates. This is Energy-coupling factor transporter ATP-binding protein EcfA1 from Staphylococcus aureus (strain MRSA252).